Here is a 481-residue protein sequence, read N- to C-terminus: MKKRMWRISLISQISDLLCLSRGSSSTLKTLTPFCFTLSRSPFHQSGGDDDASGLKNQLLRFRNDSGKVASVLERNKIQGAAFVELLRQLRPWPVLSQLVFDWRRNKALCDGLPMTADEYAKGITISGRLKNVDLALSLFHESANKTTSVYNALMGAYLCNGLSHHCEQLFLDFNSQQDGPSSSTPSVSTYNILISLYGRLIMVERMESVFLQLQQLNILPDSSTYNNLIAGYIYAWDWDKMEATFHSMKNGLVKPTLATYLLMLRGYANSGNLLRMEDMYQAVKRHVDRNEIKLIESMICAYYRSCHKDRIRKIKTLSKLIPKKSYKPWLYLLLMQVYAKDDNLHAMENFIDQAITKGLQIETDGIMRSIVASYFRCNAVDKLAKFVQRANSAGWKMSRSMFHGLMIMYGSQKRFKEMENVLSEMESFKISRSKKTLCILLRVYAATHGQEHKVNQVAGMMLKHGHDFQRPEASKRVMGK.

9 PPR repeats span residues T147 to P181, S187 to P221, D222 to P256, T257 to H287, E292 to K324, K328 to I362, T364 to M398, S399 to R433, and S434 to F469.

It belongs to the PPR family. P subfamily.

The polypeptide is Pentatricopeptide repeat-containing protein At2g48000 (Arabidopsis thaliana (Mouse-ear cress)).